Reading from the N-terminus, the 310-residue chain is Homeobox protein knotted-1-like 2 (310 aa).

Residues 178 to 208 (SDDGAVSSDEELREDDDIAADDSQQRSNDRD) are disordered. The span at 185 to 197 (SDEELREDDDIAA) shows a compositional bias: acidic residues. Positions 208 to 228 (DLKDQLLRKFGSHISSLKLEF) constitute an ELK domain. Positions 229–292 (SKKKKKGKLP…NQRKRHWKPS (64 aa)) form a DNA-binding region, homeobox; TALE-type.

This sequence belongs to the TALE/KNOX homeobox family. In terms of assembly, may form heterodimeric complex with the TALE/BELL protein BEL1, BLH1 and BLH2. Interacts with OFP12 and OFP14. Interacts with BZIP30. In terms of tissue distribution, expressed predominantly in shoot apices of seedlings, in the receptacle and developing pistil of flowers and in axillary buds of inflorescence stems.

It localises to the nucleus. Its function is as follows. May play a role in meristem function, and may be involved in maintaining cells in an undifferentiated, meristematic state. Probably binds to the DNA sequence 5'-TGAC-3'. In Arabidopsis thaliana (Mouse-ear cress), this protein is Homeobox protein knotted-1-like 2 (KNAT2).